The sequence spans 562 residues: Formate--tetrahydrofolate ligase (562 aa).

71–78 (TPAGEGKS) is a binding site for ATP.

Belongs to the formate--tetrahydrofolate ligase family.

It catalyses the reaction (6S)-5,6,7,8-tetrahydrofolate + formate + ATP = (6R)-10-formyltetrahydrofolate + ADP + phosphate. It participates in one-carbon metabolism; tetrahydrofolate interconversion. In Bacillus cereus (strain AH187), this protein is Formate--tetrahydrofolate ligase.